The primary structure comprises 746 residues: Probable ubiquitin carboxyl-terminal hydrolase MINDY-4 (746 aa).

Disordered regions lie at residues 123 to 179 (DDET…SEGE), 198 to 254 (MALG…IKGE), and 319 to 342 (GKGA…FSNM). Composition is skewed to polar residues over residues 141-152 (YRSQNDLQFNKS) and 165-174 (TEAGVTSTGV). The Nucleophile role is filled by Cys-448. Catalysis depends on His-666, which acts as the Proton acceptor.

This sequence belongs to the MINDY deubiquitinase family. FAM188 subfamily.

The catalysed reaction is Thiol-dependent hydrolysis of ester, thioester, amide, peptide and isopeptide bonds formed by the C-terminal Gly of ubiquitin (a 76-residue protein attached to proteins as an intracellular targeting signal).. Functionally, probable hydrolase that can remove 'Lys-48'-linked conjugated ubiquitin from proteins. The sequence is that of Probable ubiquitin carboxyl-terminal hydrolase MINDY-4 (mindy4) from Xenopus tropicalis (Western clawed frog).